Reading from the N-terminus, the 275-residue chain is Large ribosomal subunit protein uL2 (275 aa).

Residues 223 to 260 (VAMNPVDHPHGGGEGRTSGGRHPVSPWGLPTKGYKTRS) form a disordered region.

This sequence belongs to the universal ribosomal protein uL2 family. As to quaternary structure, part of the 50S ribosomal subunit. Forms a bridge to the 30S subunit in the 70S ribosome.

One of the primary rRNA binding proteins. Required for association of the 30S and 50S subunits to form the 70S ribosome, for tRNA binding and peptide bond formation. It has been suggested to have peptidyltransferase activity; this is somewhat controversial. Makes several contacts with the 16S rRNA in the 70S ribosome. The protein is Large ribosomal subunit protein uL2 of Legionella pneumophila (strain Lens).